The primary structure comprises 410 residues: Lissencephaly-1 homolog B (410 aa).

The LisH domain occupies 7–39 (QRDELNRAIADYLRSNGYEEAYSTFKKEAELDM). The stretch at 56-82 (TSVIRLQKKVMELESKLNEAKEEITLG) forms a coiled coil. WD repeat units lie at residues 106–147 (GHRS…RTLK), 148–187 (GHTDSVQDISFDQTGKLLASCSADMTIKLWDFQGFECIRT), 190–229 (GHDHNVSSVAIMPNGDHIVSASRDKTIKMWEVATGYCVKT), 232–271 (GHREWVRMVRPNQDGSLIASCSNDQTVRVWVATSKECKAE), 274–333 (EHEH…CLMT), 336–375 (GHDNWVRGVLVHPGGRFIVSCADDKTLRIWDYKNKRCMKT), and 378–410 (AHEHFVTSLDMHQTAPYVVTGSVDQTVKVWECR).

This sequence belongs to the WD repeat LIS1/nudF family. Can self-associate. Component of the cytosolic PAF-AH (I) heterotetrameric enzyme, which is composed of PAFAH1B1 (beta), PAFAH1B2 (alpha2) and PAFAH1B3 (alpha1) subunits. The catalytic activity of the enzyme resides in the alpha1 (PAFAH1B3) and alpha2 (PAFAH1B2) subunits, whereas the beta subunit (PAFAH1B1) has regulatory activity. Trimer formation is not essential for the catalytic activity. Interacts with dynein, dynactin, nde1 and ndel1.

Its subcellular location is the cytoplasm. It is found in the cytoskeleton. The protein resides in the microtubule organizing center. It localises to the centrosome. Regulatory subunit (beta subunit) of the cytosolic type I platelet-activating factor (PAF) acetylhydrolase (PAF-AH (I)), an enzyme that catalyzes the hydrolyze of the acetyl group at the sn-2 position of PAF and its analogs and participates in PAF inactivation. Regulates the PAF-AH (I) activity in a catalytic dimer composition-dependent manner. Positively regulates the activity of the minus-end directed microtubule motor protein dynein. May enhance dynein-mediated microtubule sliding by targeting dynein to the microtubule plus end. Required for several dynein- and microtubule-dependent processes such as the maintenance of Golgi integrity, the peripheral transport of microtubule fragments and the coupling of the nucleus and centrosome. May be required for proliferation of neuronal precursors and neuronal migration. The protein is Lissencephaly-1 homolog B (pafah1b1-2) of Salmo salar (Atlantic salmon).